A 185-amino-acid polypeptide reads, in one-letter code: Ribosome-recycling factor (185 aa).

This sequence belongs to the RRF family.

The protein localises to the cytoplasm. Functionally, responsible for the release of ribosomes from messenger RNA at the termination of protein biosynthesis. May increase the efficiency of translation by recycling ribosomes from one round of translation to another. The chain is Ribosome-recycling factor from Buchnera aphidicola subsp. Schizaphis graminum (strain Sg).